We begin with the raw amino-acid sequence, 162 residues long: Shikimate kinase (162 aa).

Residue 10–15 (GAGKST) coordinates ATP. Residue Ser14 participates in Mg(2+) binding. Asp28, Arg52, and Gly73 together coordinate substrate. Arg113 is an ATP binding site. Arg129 is a substrate binding site.

Belongs to the shikimate kinase family. In terms of assembly, monomer. The cofactor is Mg(2+).

It is found in the cytoplasm. It carries out the reaction shikimate + ATP = 3-phosphoshikimate + ADP + H(+). It participates in metabolic intermediate biosynthesis; chorismate biosynthesis; chorismate from D-erythrose 4-phosphate and phosphoenolpyruvate: step 5/7. Its function is as follows. Catalyzes the specific phosphorylation of the 3-hydroxyl group of shikimic acid using ATP as a cosubstrate. This Lactococcus lactis subsp. lactis (strain IL1403) (Streptococcus lactis) protein is Shikimate kinase.